A 334-amino-acid chain; its full sequence is L-lactate dehydrogenase C chain (334 aa).

Residues 30–58, R100, and N139 each bind NAD(+); that span reads GQVG…LEDK. Substrate-binding residues include N139 and R170. H194 (proton acceptor) is an active-site residue. Substrate is bound at residue T249.

Belongs to the LDH/MDH superfamily. LDH family. As to quaternary structure, homotetramer.

The protein localises to the cytoplasm. The catalysed reaction is (S)-lactate + NAD(+) = pyruvate + NADH + H(+). It participates in fermentation; pyruvate fermentation to lactate; (S)-lactate from pyruvate: step 1/1. The polypeptide is L-lactate dehydrogenase C chain (ldhc) (Xenopus laevis (African clawed frog)).